An 82-amino-acid polypeptide reads, in one-letter code: MTTIPAIGILPIDFLTILLLFSFISHSVCVEFAEDAGELDKSNAFRRQVPQWAVGHFMGKRSLSDDTEQATMYSSRFVESTS.

An N-terminal signal peptide occupies residues 1 to 27 (MTTIPAIGILPIDFLTILLLFSFISHS). Residues 28-47 (VCVEFAEDAGELDKSNAFRR) constitute a propeptide that is removed on maturation. Position 58 is a methionine amide (Met58). Positions 62–82 (SLSDDTEQATMYSSRFVESTS) are excised as a propeptide.

This sequence belongs to the bombesin/neuromedin-B/ranatensin family. As to expression, expressed by the skin glands.

The protein resides in the secreted. The protein is Ranatensin of Lithobates pipiens (Northern leopard frog).